A 202-amino-acid polypeptide reads, in one-letter code: Imidazoleglycerol-phosphate dehydratase (202 aa).

Belongs to the imidazoleglycerol-phosphate dehydratase family.

It localises to the cytoplasm. The enzyme catalyses D-erythro-1-(imidazol-4-yl)glycerol 3-phosphate = 3-(imidazol-4-yl)-2-oxopropyl phosphate + H2O. The protein operates within amino-acid biosynthesis; L-histidine biosynthesis; L-histidine from 5-phospho-alpha-D-ribose 1-diphosphate: step 6/9. In Corynebacterium glutamicum (strain ATCC 13032 / DSM 20300 / JCM 1318 / BCRC 11384 / CCUG 27702 / LMG 3730 / NBRC 12168 / NCIMB 10025 / NRRL B-2784 / 534), this protein is Imidazoleglycerol-phosphate dehydratase.